The following is a 432-amino-acid chain: Adenylosuccinate synthetase (432 aa).

GTP contacts are provided by residues 12–18 (GDEGKGK) and 40–42 (GHT). Catalysis depends on Asp-13, which acts as the Proton acceptor. Mg(2+) is bound by residues Asp-13 and Gly-40. IMP is bound by residues 13 to 16 (DEGK), 38 to 41 (NAGH), Thr-132, Arg-146, Gln-226, Thr-241, and Arg-305. The Proton donor role is filled by His-41. 301–307 (VVTGRKR) contributes to the substrate binding site. Residues Arg-307, 333 to 335 (KLD), and 415 to 417 (STS) contribute to the GTP site.

The protein belongs to the adenylosuccinate synthetase family. In terms of assembly, homodimer. It depends on Mg(2+) as a cofactor.

The protein localises to the cytoplasm. The enzyme catalyses IMP + L-aspartate + GTP = N(6)-(1,2-dicarboxyethyl)-AMP + GDP + phosphate + 2 H(+). Its pathway is purine metabolism; AMP biosynthesis via de novo pathway; AMP from IMP: step 1/2. In terms of biological role, plays an important role in the de novo pathway of purine nucleotide biosynthesis. Catalyzes the first committed step in the biosynthesis of AMP from IMP. The chain is Adenylosuccinate synthetase from Mesorhizobium japonicum (strain LMG 29417 / CECT 9101 / MAFF 303099) (Mesorhizobium loti (strain MAFF 303099)).